We begin with the raw amino-acid sequence, 74 residues long: Protein translocase subunit SecE (74 aa).

The Cytoplasmic portion of the chain corresponds to 1–36 (MKTDFNQKIEQLKEFIEECRRVWLVLKKPTKDEYLA). A helical transmembrane segment spans residues 37–62 (VAKVTALGISLLGIIGYIIHVPATYI). Residues 63–74 (KGILKPPTTPRV) lie on the Extracellular side of the membrane.

Belongs to the SecE/SEC61-gamma family. In terms of assembly, component of the Sec protein translocase complex. Heterotrimer consisting of alpha (SecY), beta (SecG) and gamma (SecE) subunits. The heterotrimers can form oligomers, although 1 heterotrimer is thought to be able to translocate proteins. Interacts with the ribosome. May interact with SecDF, and other proteins may be involved.

The protein localises to the cell membrane. Its function is as follows. Essential subunit of the protein translocation channel SecYEG. Clamps together the 2 halves of SecY. May contact the channel plug during translocation. In Methanocaldococcus jannaschii (strain ATCC 43067 / DSM 2661 / JAL-1 / JCM 10045 / NBRC 100440) (Methanococcus jannaschii), this protein is Protein translocase subunit SecE.